A 640-amino-acid chain; its full sequence is Auxin efflux carrier component 3 (640 aa).

Topologically, residues 1–7 (MISWHDL) are extracellular. A helical transmembrane segment spans residues 8–28 (YTVLTAVIPLYVAMILAYGSV). Topologically, residues 29 to 38 (RWWKIFSPDQ) are cytoplasmic. A helical transmembrane segment spans residues 39 to 59 (CSGINRFVAIFAVPLLSFHFI). Val51 is a (indol-3-yl)acetate binding site. Residues 60-71 (STNNPYAMNLRF) are Extracellular-facing. Residues 72-92 (IAADTLQKIIMLSLLVLWANF) form a helical membrane-spanning segment. Topologically, residues 93–101 (TRSGSLEWS) are cytoplasmic. A helical membrane pass occupies residues 102-122 (ITIFSLSTLPNTLVMGIPLLI). Asn112 and Leu114 together coordinate (indol-3-yl)acetate. Over 123–131 (AMYGEYSGS) the chain is Extracellular. A helical membrane pass occupies residues 132–152 (LMVQIVVLQCIIWYTLLLFLF). Tyr145 is a (indol-3-yl)acetate binding site. The Cytoplasmic segment spans residues 153 to 500 (EFRGAKMLIM…LIRNPNTYSS (348 aa)). Ser226, Ser243, and Ser283 each carry phosphoserine. The tract at residues 310 to 351 (APNPEFSSTTTSTANKSVNKNPKDVNTNQQTTLPTGGKSNSH) is disordered. Over residues 314-348 (EFSSTTTSTANKSVNKNPKDVNTNQQTTLPTGGKS) the composition is skewed to polar residues. Thr322 carries the phosphothreonine modification. Ser366 carries the phosphoserine modification. 2 disordered regions span residues 372–391 (AGLNVFGGAPDNDQGGRSDQ) and 404–471 (SHNG…SQRK). Residues 430-442 (GKEEEAERPKDAE) show a composition bias toward basic and acidic residues. Residues 449-460 (APNSTAALQSKT) show a composition bias toward polar residues. Residues 501–521 (LIGLIWALVAFRWHVAMPKII) form a helical membrane-spanning segment. Residues 522–524 (QQS) are Extracellular-facing. A helical membrane pass occupies residues 525–545 (ISILSDAGLGMAMFSLGLFMA). Over 546–559 (LQPKLIACGNSVAT) the chain is Cytoplasmic. The chain crosses the membrane as a helical span at residues 560-580 (FAMAVRFLTGPAVMAVAAIAI). Topologically, residues 581–585 (GLRGD) are extracellular. Residues 586-606 (LLRVAIVQAALPQGIVPFVFA) form a helical membrane-spanning segment. (indol-3-yl)acetate contacts are provided by Ile600 and Val601. The Cytoplasmic segment spans residues 607-619 (KEYNVHPAILSTG). The helical transmembrane segment at 620–640 (VIFGMLIALPITLVYYILLGL) threads the bilayer.

This sequence belongs to the auxin efflux carrier (TC 2.A.69.1) family. As to quaternary structure, homodimer. In terms of tissue distribution, predominantly expressed at the lateral side of shoot endodermis cells as well as root pericycle and columella cells.

The protein resides in the cell membrane. Auxin efflux carrier activity is competitively inhibited by naptalamate (N-1-naphthylphthalamic acid, NPA). Acts as a component of the auxin efflux carrier; this activity is enhanced when activated by PID-mediated phosphorylation. Seems to be involved in the lateral auxin transport system. Together with PIN4 and PIN7, involved in the connective auxin transport (CAT) that ensures communication across the shoot system, and modulates strigolactone-mediated shoot branching control. Binds auxins including indole-3-acetic acid (IAA). Coordinated polar localization of PIN3 is directly regulated by the vesicle trafficking process. The polypeptide is Auxin efflux carrier component 3 (Arabidopsis thaliana (Mouse-ear cress)).